A 71-amino-acid polypeptide reads, in one-letter code: Small ribosomal subunit protein bS21 (71 aa).

This sequence belongs to the bacterial ribosomal protein bS21 family.

The sequence is that of Small ribosomal subunit protein bS21 from Blochmanniella pennsylvanica (strain BPEN).